Here is a 351-residue protein sequence, read N- to C-terminus: Magnesium-protoporphyrin IX monomethyl ester [oxidative] cyclase 1 (351 aa).

This sequence belongs to the AcsF family. Fe cation is required as a cofactor.

The enzyme catalyses Mg-protoporphyrin IX 13-monomethyl ester + 3 NADPH + 3 O2 + 2 H(+) = 3,8-divinyl protochlorophyllide a + 3 NADP(+) + 5 H2O. The protein operates within porphyrin-containing compound metabolism; chlorophyll biosynthesis (light-independent). Its function is as follows. Catalyzes the formation of the isocyclic ring in chlorophyll biosynthesis. Mediates the cyclase reaction, which results in the formation of divinylprotochlorophyllide (Pchlide) characteristic of all chlorophylls from magnesium-protoporphyrin IX 13-monomethyl ester (MgPMME). The protein is Magnesium-protoporphyrin IX monomethyl ester [oxidative] cyclase 1 of Nostoc sp. (strain PCC 7120 / SAG 25.82 / UTEX 2576).